A 444-amino-acid polypeptide reads, in one-letter code: Acyl-CoA 6-desaturase (444 aa).

Topologically, residues 1-131 (MGKGGNQGEG…DMNLFKTNHV (131 aa)) are cytoplasmic. The Cytochrome b5 heme-binding domain occupies 18–95 (MPTFSWEEIQ…LKPLLIGELA (78 aa)). The helical transmembrane segment at 132–152 (FFLLLLAHIIALESIAWFTVF) threads the bilayer. The Lumenal portion of the chain corresponds to 153 to 157 (YFGNG). The helical transmembrane segment at 158–178 (WIPTLITAFVLATSQAQAGWL) threads the bilayer. The Cytoplasmic portion of the chain corresponds to 179–264 (QHDYGHLSVY…KYLPYNHQHE (86 aa)). The Histidine box-1 signature appears at 180–184 (HDYGH). Residues 217-221 (HFQHH) carry the Histidine box-2 motif. A helical transmembrane segment spans residues 265 to 285 (YFFLIGPPLLIPMYFQYQIIM). At 286-305 (TMIVHKNWVDLAWAISYYIR) the chain is on the lumenal side. A helical transmembrane segment spans residues 306 to 326 (FFVTYIPFYGILGALLFLNFI). The Cytoplasmic portion of the chain corresponds to 327–444 (RFLESHWFVW…KLWLDAYLHK (118 aa)). The Histidine box-3 signature appears at 382–386 (QIEHH).

It belongs to the fatty acid desaturase type 1 family.

It is found in the endoplasmic reticulum membrane. It catalyses the reaction (9Z,12Z)-octadecadienoyl-CoA + 2 Fe(II)-[cytochrome b5] + O2 + 2 H(+) = (6Z,9Z,12Z)-octadecatrienoyl-CoA + 2 Fe(III)-[cytochrome b5] + 2 H2O. The enzyme catalyses (9Z,12Z,15Z)-octadecatrienoyl-CoA + 2 Fe(II)-[cytochrome b5] + O2 + 2 H(+) = (6Z,9Z,12Z,15Z)-octadecatetraenoyl-CoA + 2 Fe(III)-[cytochrome b5] + 2 H2O. It carries out the reaction (9Z,12Z,15Z,18Z,21Z)-tetracosapentaenoyl-CoA + 2 Fe(II)-[cytochrome b5] + O2 + 2 H(+) = (6Z,9Z,12Z,15Z,18Z,21Z)-tetracosahexaenoyl-CoA + 2 Fe(III)-[cytochrome b5] + 2 H2O. The catalysed reaction is (11E)-octadecenoyl-CoA + 2 Fe(II)-[cytochrome b5] + O2 + 2 H(+) = (6Z,11E)-octadecadienoyl-CoA + 2 Fe(III)-[cytochrome b5] + 2 H2O. It catalyses the reaction (11Z,14Z)-eicosadienoyl-CoA + 2 Fe(II)-[cytochrome b5] + O2 + 2 H(+) = (8Z,11Z,14Z)-eicosatrienoyl-CoA + 2 Fe(III)-[cytochrome b5] + 2 H2O. The enzyme catalyses (11Z,14Z,17Z)-eicosatrienoyl-CoA + 2 Fe(II)-[cytochrome b5] + O2 + 2 H(+) = (8Z,11Z,14Z,17Z)-eicosatetraenoyl-CoA + 2 Fe(III)-[cytochrome b5] + 2 H2O. Its pathway is lipid metabolism; polyunsaturated fatty acid biosynthesis. Functionally, involved in the biosynthesis of highly unsaturated fatty acids (HUFA) from the essential polyunsaturated fatty acids (PUFA) linoleic acid (LA) (18:2n-6) and alpha-linolenic acid (ALA) (18:3n-3) precursors, acting as a fatty acyl-coenzyme A (CoA) desaturase that introduces a cis double bond at carbon 6 of the fatty acyl chain. Catalyzes the first and rate limiting step in this pathway which is the desaturation of LA (18:2n-6) and ALA (18:3n-3) into gamma-linoleate (GLA) (18:3n-6) and stearidonate (18:4n-3), respectively. Subsequently, in the biosynthetic pathway of HUFA n-3 series, it desaturates tetracosapentaenoate (24:5n-3) to tetracosahexaenoate (24:6n-3), which is then converted to docosahexaenoate (DHA)(22:6n-3), an important lipid for nervous system function. It can also desaturate (11E)-octadecenoate (trans-vaccenoate) at carbon 6 generating (6Z,11E)-octadecadienoate. In addition to Delta-6 activity, this enzyme exhibits Delta-8 activity with slight biases toward n-3 fatty acyl-CoA substrates. This is Acyl-CoA 6-desaturase (FADS2) from Macaca fascicularis (Crab-eating macaque).